The following is a 537-amino-acid chain: uncharacterized protein (537 aa).

This is an uncharacterized protein from Bacillus subtilis (strain 168).